The following is a 252-amino-acid chain: Flavin-dependent thymidylate synthase (252 aa).

Residues 7–235 (LDVQLVACST…PTVFSDFETS (229 aa)) enclose the ThyX domain. Residues 94–97 (ELVR), 105–109 (QLSQR), and R174 contribute to the dUMP site. Residues 97-99 (RHR) and Q105 contribute to the FAD site. Positions 97 to 107 (RHRHFSFSQLS) match the ThyX motif motif. FAD is bound by residues 190–192 (NFR) and H196. R201 contributes to the dUMP binding site. The Involved in ionization of N3 of dUMP, leading to its activation role is filled by R201.

Belongs to the thymidylate synthase ThyX family. As to quaternary structure, homotetramer. The cofactor is FAD.

It catalyses the reaction dUMP + (6R)-5,10-methylene-5,6,7,8-tetrahydrofolate + NADPH + H(+) = dTMP + (6S)-5,6,7,8-tetrahydrofolate + NADP(+). Its pathway is pyrimidine metabolism; dTTP biosynthesis. Functionally, catalyzes the reductive methylation of 2'-deoxyuridine-5'-monophosphate (dUMP) to 2'-deoxythymidine-5'-monophosphate (dTMP) while utilizing 5,10-methylenetetrahydrofolate (mTHF) as the methyl donor, and NADPH and FADH(2) as the reductant. This Corynebacterium diphtheriae (strain ATCC 700971 / NCTC 13129 / Biotype gravis) protein is Flavin-dependent thymidylate synthase.